A 474-amino-acid chain; its full sequence is Glutathione synthetase (474 aa).

Ala-2 is subject to N-acetylalanine. Residue Arg-125 participates in substrate binding. An ATP-binding site is contributed by Glu-144. Residues Glu-144 and Asn-146 each coordinate Mg(2+). Residues 148–151, 214–216, Gln-220, and 267–270 each bind substrate; these read ISAS, ERN, and RDGY. ATP is bound by residues Lys-305, 364–373, Tyr-375, and 398–401; these read KPQREGGGNN and MEKI. Glu-368 contributes to the Mg(2+) binding site. Ser-415 is subject to Phosphoserine. Glu-425 contacts ATP. Arg-450 lines the substrate pocket. Residues Lys-452 and Asp-458 each coordinate ATP. 461–462 is a binding site for substrate; that stretch reads VA.

It belongs to the eukaryotic GSH synthase family. In terms of assembly, homodimer. Requires Mg(2+) as cofactor.

It carries out the reaction gamma-L-glutamyl-L-cysteine + glycine + ATP = glutathione + ADP + phosphate + H(+). The catalysed reaction is gamma-L-glutamyl-(2S)-2-aminobutanoate + glycine + ATP = ophthalmate + ADP + phosphate + H(+). The protein operates within sulfur metabolism; glutathione biosynthesis; glutathione from L-cysteine and L-glutamate: step 2/2. Catalyzes the production of glutathione from gamma-glutamylcysteine and glycine in an ATP-dependent manner. Glutathione (gamma-glutamylcysteinylglycine, GSH) is the most abundant intracellular thiol in living aerobic cells and is required for numerous processes including the protection of cells against oxidative damage, amino acid transport, the detoxification of foreign compounds, the maintenance of protein sulfhydryl groups in a reduced state and acts as a cofactor for a number of enzymes. Participates in ophthalmate biosynthesis in hepatocytes. The protein is Glutathione synthetase of Mus musculus (Mouse).